A 687-amino-acid chain; its full sequence is Pentatricopeptide repeat-containing protein At3g09060 (687 aa).

PPR repeat units lie at residues 42–76 (SAVV…ECKC), 77–107 (DEDV…MREI), 113–147 (AIRS…GVAP), 148–182 (NLQT…GFKP), 183–217 (DVFS…GVAP), 218–253 (DVTC…SVYP), 254–288 (NVKT…EREK), 289–323 (DLYT…KASI), 324–358 (DVVT…NSVN), 359–392 (IVSY…GYAA), 393–427 (DKTT…GGHL), 428–462 (DVYA…GVEL), 463–497 (NSHV…GCRP), 498–532 (TVVS…GWKP), 533–567 (DLKT…GLET), 568–602 (DVMM…NCTA), 603–637 (NLVT…GLQP), and 638–672 (DIIS…GIFP).

The protein belongs to the PPR family. P subfamily.

This is Pentatricopeptide repeat-containing protein At3g09060 from Arabidopsis thaliana (Mouse-ear cress).